We begin with the raw amino-acid sequence, 606 residues long: Protein spire homolog 2 (606 aa).

Positions 21–219 (LSLEEVLKSY…RALFLETLEL (199 aa)) constitute a KIND domain. Residues 147-181 (KHCGSNAAKDEGYSGQDEEEEEEEEEEEEGAGRGI) form a disordered region. The span at 162 to 175 (QDEEEEEEEEEEEE) shows a compositional bias: acidic residues. 2 WH2 domains span residues 263-277 (QLMK…LKKV) and 357-374 (LHDR…LRPV). 2 disordered regions span residues 438 to 464 (DEDS…RSFS) and 517 to 537 (CRSL…ASHG). A compositionally biased stretch (basic and acidic residues) spans 445 to 464 (VDMRRVESSPTPLKRDRSFS). A spir-box region spans residues 554–574 (LALTVDGVINVRRILVKAEME).

Belongs to the spire family.

Its subcellular location is the cytoplasm. It localises to the cytoskeleton. The protein resides in the cytosol. The protein localises to the cell membrane. It is found in the cytoplasmic vesicle membrane. Functionally, acts as an actin nucleation factor, remains associated with the slow-growing pointed end of the new filament. Involved in intracellular vesicle transport along actin fibers, providing a novel link between actin cytoskeleton dynamics and intracellular transport. Required for asymmetric spindle positioning and asymmetric cell division during oocyte meiosis. Required for normal formation of the cleavage furrow and for polar body extrusion during female germ cell meiosis. Also acts in the nucleus: together with SPIRE1 and SPIRE2, promotes assembly of nuclear actin filaments in response to DNA damage in order to facilitate movement of chromatin and repair factors after DNA damage. The polypeptide is Protein spire homolog 2 (spire2) (Danio rerio (Zebrafish)).